The sequence spans 313 residues: Tyrosine recombinase XerC (313 aa).

In terms of domain architecture, Core-binding (CB) spans 1 to 85 (MNDQVEAFLR…AVKSFFAFLT (85 aa)). The 186-residue stretch at 106–291 (DLPRALTPHQ…NHASSAQPVR (186 aa)) folds into the Tyr recombinase domain. Catalysis depends on residues R147, K171, H243, R246, and H269. Y278 acts as the O-(3'-phospho-DNA)-tyrosine intermediate in catalysis.

Belongs to the 'phage' integrase family. XerC subfamily. As to quaternary structure, forms a cyclic heterotetrameric complex composed of two molecules of XerC and two molecules of XerD.

The protein resides in the cytoplasm. Site-specific tyrosine recombinase, which acts by catalyzing the cutting and rejoining of the recombining DNA molecules. The XerC-XerD complex is essential to convert dimers of the bacterial chromosome into monomers to permit their segregation at cell division. It also contributes to the segregational stability of plasmids. This is Tyrosine recombinase XerC from Roseiflexus sp. (strain RS-1).